We begin with the raw amino-acid sequence, 91 residues long: Small ribosomal subunit protein uS15 (91 aa).

The protein belongs to the universal ribosomal protein uS15 family. Part of the 30S ribosomal subunit. Forms a bridge to the 50S subunit in the 70S ribosome, contacting the 23S rRNA.

One of the primary rRNA binding proteins, it binds directly to 16S rRNA where it helps nucleate assembly of the platform of the 30S subunit by binding and bridging several RNA helices of the 16S rRNA. In terms of biological role, forms an intersubunit bridge (bridge B4) with the 23S rRNA of the 50S subunit in the ribosome. This Legionella pneumophila (strain Corby) protein is Small ribosomal subunit protein uS15.